The sequence spans 501 residues: MTTEEAMPEKAKCPTLEITKQDFFQEAKTLIAQHYEKINENKVQGTSINVFRKKHQKPKSGKYIPLEIDKKVTRDVVQEHRAALRRICFPKELSKSEHLQEPPQRISFKEPHIFSRRERCRPIDLITKGQVKLDKIMTIIEPVSKKMETAKQQHFEESRNRMLELLYPFPVHLYLQPGTSNLELLKEPDKAFYDWRGFVLTRSFRLACDSRRVSFSQSSSIFRDYYSKTFKTLIKKERQPIKPEPKSQPRIKGTPNKTDKLDSKVKRIGPHIEIFQVFRERKKFMITPKLIRMVTVMQAHVRGWLERKRLQRVMTKALDHGPDMKAVINMYGRLIHRVRYRRGLWRTRQILNLAELEEWMDRKKFYEIMFAKREDWPKIERNELPNFFSDCGHFPTQKQVDDTWDLVHQDGKEKYSELIKKSKAIEMLFTLYPPEGAHVPDSTLLKSTWLRPIVNGEEGYRYIVNGHPALKRANIRVVGKLVARSIRERKMRQHYKSCKVE.

The segment covering 237–247 (ERQPIKPEPKS) has biased composition (basic and acidic residues). A disordered region spans residues 237 to 262 (ERQPIKPEPKSQPRIKGTPNKTDKLD). Residues 290–319 (LIRMVTVMQAHVRGWLERKRLQRVMTKALD) form the IQ domain.

This chain is IQ domain-containing protein M, found in Homo sapiens (Human).